The following is a 95-amino-acid chain: Aspartyl/glutamyl-tRNA(Asn/Gln) amidotransferase subunit C (95 aa).

This sequence belongs to the GatC family. As to quaternary structure, heterotrimer of A, B and C subunits.

It carries out the reaction L-glutamyl-tRNA(Gln) + L-glutamine + ATP + H2O = L-glutaminyl-tRNA(Gln) + L-glutamate + ADP + phosphate + H(+). The catalysed reaction is L-aspartyl-tRNA(Asn) + L-glutamine + ATP + H2O = L-asparaginyl-tRNA(Asn) + L-glutamate + ADP + phosphate + 2 H(+). In terms of biological role, allows the formation of correctly charged Asn-tRNA(Asn) or Gln-tRNA(Gln) through the transamidation of misacylated Asp-tRNA(Asn) or Glu-tRNA(Gln) in organisms which lack either or both of asparaginyl-tRNA or glutaminyl-tRNA synthetases. The reaction takes place in the presence of glutamine and ATP through an activated phospho-Asp-tRNA(Asn) or phospho-Glu-tRNA(Gln). This is Aspartyl/glutamyl-tRNA(Asn/Gln) amidotransferase subunit C from Acetivibrio thermocellus (strain ATCC 27405 / DSM 1237 / JCM 9322 / NBRC 103400 / NCIMB 10682 / NRRL B-4536 / VPI 7372) (Clostridium thermocellum).